A 368-amino-acid polypeptide reads, in one-letter code: Glycine betaine monooxygenase reductase subunit (368 aa).

The region spanning Asn-16–Ile-119 is the FAD-binding FR-type domain. Residues Leu-284–Phe-368 form the 2Fe-2S ferredoxin-type domain. Cys-318, Cys-323, Cys-326, and Cys-356 together coordinate [2Fe-2S] cluster.

This sequence in the N-terminal section; belongs to the FAD-binding oxidoreductase type 6 family. In terms of assembly, monomer. The system is composed of an oxygenase subunit (BmoA) and a reductase subunit (BmoB). Maximal specific activity is obtained when the ratio of BmoA to BmoB is 5:1. FAD serves as cofactor. The cofactor is [2Fe-2S] cluster.

It catalyses the reaction glycine betaine + NADH + O2 + H(+) = N,N-dimethylglycine + formaldehyde + NAD(+) + H2O. In terms of biological role, involved in degradation of glycine betaine. Part of a Rieske-type oxygenase system that catalyzes the conversion of glycine betaine (GB) to dimethylglycine (DMG). This subunit is the ferredoxin reductase component of the system. NADH is the preferred electron donor. The protein is Glycine betaine monooxygenase reductase subunit of Chromohalobacter salexigens (strain ATCC BAA-138 / DSM 3043 / CIP 106854 / NCIMB 13768 / 1H11).